Here is an 88-residue protein sequence, read N- to C-terminus: Sec-independent protein translocase protein TatA (88 aa).

A helical membrane pass occupies residues 1–21 (MGGASIWHWIVVGVIVMLLFG). Positions 62–88 (TEPVRTLPPHPTEPAPATHATVDRKVV) are disordered.

This sequence belongs to the TatA/E family. As to quaternary structure, the Tat system comprises two distinct complexes: a TatABC complex, containing multiple copies of TatA, TatB and TatC subunits, and a separate TatA complex, containing only TatA subunits. Substrates initially bind to the TatABC complex, which probably triggers association of the separate TatA complex to form the active translocon.

It localises to the cell inner membrane. Part of the twin-arginine translocation (Tat) system that transports large folded proteins containing a characteristic twin-arginine motif in their signal peptide across membranes. TatA could form the protein-conducting channel of the Tat system. The chain is Sec-independent protein translocase protein TatA from Methylobacterium sp. (strain 4-46).